We begin with the raw amino-acid sequence, 329 residues long: Beta-ketoacyl-[acyl-carrier-protein] synthase III (329 aa).

Active-site residues include C112 and H253. Positions 254-258 are ACP-binding; it reads QANQR. Residue N283 is part of the active site.

This sequence belongs to the thiolase-like superfamily. FabH family. In terms of assembly, homodimer.

The protein resides in the cytoplasm. The catalysed reaction is malonyl-[ACP] + acetyl-CoA + H(+) = 3-oxobutanoyl-[ACP] + CO2 + CoA. The protein operates within lipid metabolism; fatty acid biosynthesis. Its function is as follows. Catalyzes the condensation reaction of fatty acid synthesis by the addition to an acyl acceptor of two carbons from malonyl-ACP. Catalyzes the first condensation reaction which initiates fatty acid synthesis and may therefore play a role in governing the total rate of fatty acid production. Possesses both acetoacetyl-ACP synthase and acetyl transacylase activities. Its substrate specificity determines the biosynthesis of branched-chain and/or straight-chain of fatty acids. The chain is Beta-ketoacyl-[acyl-carrier-protein] synthase III from Gloeobacter violaceus (strain ATCC 29082 / PCC 7421).